The sequence spans 156 residues: Arginine repressor (156 aa).

It belongs to the ArgR family.

Its subcellular location is the cytoplasm. Its pathway is amino-acid biosynthesis; L-arginine biosynthesis [regulation]. Regulates arginine biosynthesis genes. This Escherichia coli O81 (strain ED1a) protein is Arginine repressor.